The chain runs to 622 residues: Auxin efflux carrier component 1 (622 aa).

Residues 1–6 (MITAAD) lie on the Extracellular side of the membrane. Residues 7–27 (FYHVMTAMVPLYVAMILAYGS) traverse the membrane as a helical segment. Residues 28–44 (VKWWKIFTPDQCSGINR) are Cytoplasmic-facing. Residues 45–65 (FVALFAVPLLSFHFIAANNPY) traverse the membrane as a helical segment. Val51 serves as a coordination point for (indol-3-yl)acetate. Residues 66–70 (AMNLR) are Extracellular-facing. Residues 71–91 (FLAADSLQKVIVLSLLFLWCK) form a helical membrane-spanning segment. Topologically, residues 92 to 100 (LSRNGSLDW) are cytoplasmic. The helical transmembrane segment at 101 to 121 (TITLFSLSTLPNTLVMGIPLL) threads the bilayer. 2 residues coordinate (indol-3-yl)acetate: Asn112 and Leu114. The Extracellular portion of the chain corresponds to 122 to 131 (KGMYGNFSGD). N-linked (GlcNAc...) asparagine glycosylation occurs at Asn127. A helical membrane pass occupies residues 132-152 (LMVQIVVLQCIIWYTLMLFLF). Residue Tyr145 participates in (indol-3-yl)acetate binding. The Cytoplasmic portion of the chain corresponds to 153-482 (EYRGAKLLIS…LIRNPNSYSS (330 aa)). Phosphoserine occurs at positions 209, 212, 221, and 225. Residues 213-233 (RSDIYSRRSQGLSATPRPSNL) are disordered. Residue Thr227 is modified to Phosphothreonine. Ser231 carries the phosphoserine modification. A Phosphothreonine modification is found at Thr248. Phosphoserine occurs at positions 252, 253, and 271. Residues 268 to 362 (GRNSNFGPGE…PVVGGKRQDG (95 aa)) form a disordered region. Thr286 carries the post-translational modification Phosphothreonine. At Ser290 the chain carries Phosphoserine. Residues 298-311 (PAKPTAAGTAAGAG) are compositionally biased toward low complexity. Residue Thr302 is modified to Phosphothreonine. Phosphoserine occurs at positions 317, 320, and 337. Thr340 is subject to Phosphothreonine. Phosphoserine is present on residues Ser374, Ser377, Ser408, Ser414, Ser426, Ser434, and Ser446. The helical transmembrane segment at 483–503 (LFGITWSLISFKWNIEMPALI) threads the bilayer. At 504–506 (AKS) the chain is on the extracellular side. Residues 507-527 (ISILSDAGLGMAMFSLGLFMA) traverse the membrane as a helical segment. Over 528-541 (LNPRIIACGNRRAA) the chain is Cytoplasmic. A helical transmembrane segment spans residues 542–562 (FAAAMRFVVGPAVMLVASYAV). Residues 563–566 (GLRG) lie on the Extracellular side of the membrane. The chain crosses the membrane as a helical span at residues 567–587 (VLLHVAIIQAALPQGIVPFVF). The (indol-3-yl)acetate site is built by Ile582 and Val583. Residues 588–601 (AKEYNVHPDILSTA) lie on the Cytoplasmic side of the membrane. Residues 602–622 (VIFGMLIALPITLLYYILLGL) form a helical membrane-spanning segment.

It belongs to the auxin efflux carrier (TC 2.A.69.1) family. In terms of assembly, homodimer. Interacts with TOPP4. Interacts with FYPP1 and FYPP3. Component of a complex made of PINs (e.g. PIN1 and PIN2), MAB4/MELs (e.g. NPY1/MAB4 and NPY5/MEL1) and AGC kinases (e.g. D6PK and PID) at the plasma membrane. Binds directly to NPY5/MEL1. Expressed at the basal side of elongated parenchymatous xylem cells.

It localises to the cell membrane. Its activity is regulated as follows. Auxin efflux carrier activity is competitively inhibited by naptalamate (N-1-naphthylphthalamic acid, NPA) but activated by D6PK-mediated phosphorylation. Functionally, acts as a component of the auxin efflux carrier; this activity is enhanced when activated by D6PK-mediated phosphorylation. Binds auxins including indole-3-acetic acid (IAA), indole-3-butyric acid (IBA), indole-3-propionic acid (IPA) and 4-chloroindole-3-acetic acid (4-Cl-IAA). Seems to be involved in the basipetal auxin transport. Mediates the formation of auxin gradient which is required to ensure correct organogenesis. Coordinated polar localization of PIN1 is directly regulated by the vesicle trafficking process and apical-basal PIN1 polarity also depends on the phosphorylation of conserved serine residues by PID kinase. The ARF-GEF protein GNOM is required for the correct recycling of PIN1 between the plasma membrane and endosomal compartments. Recrutes NPY proteins (e.g. NPY1/MAB4 and NPY5/MEL1) to the plasma membrane in a polar basal localization in root epidermis; this activity is optimized by AGC kinases-mediated (e.g. D6PK and PID) phosphorylation that limits their lateral diffusion-based escape. This Arabidopsis thaliana (Mouse-ear cress) protein is Auxin efflux carrier component 1.